We begin with the raw amino-acid sequence, 230 residues long: Metaxin-2 homolog (230 aa).

It belongs to the metaxin family. As to quaternary structure, associates with the mitochondrial contact site and cristae organizing system (MICOS) complex (also known as MINOS or MitOS complex).

The protein localises to the mitochondrion outer membrane. Functionally, involved in transport of proteins into the mitochondrion. The sequence is that of Metaxin-2 homolog (mtx-2) from Caenorhabditis elegans.